A 257-amino-acid polypeptide reads, in one-letter code: DNA repair protein RecO (257 aa).

The protein belongs to the RecO family.

In terms of biological role, involved in DNA repair and RecF pathway recombination. This Variovorax paradoxus (strain S110) protein is DNA repair protein RecO.